Here is a 217-residue protein sequence, read N- to C-terminus: GTP cyclohydrolase 1 (217 aa).

Zn(2+)-binding residues include Cys108, His111, and Cys179.

Belongs to the GTP cyclohydrolase I family. As to quaternary structure, toroid-shaped homodecamer, composed of two pentamers of five dimers.

The enzyme catalyses GTP + H2O = 7,8-dihydroneopterin 3'-triphosphate + formate + H(+). Its pathway is cofactor biosynthesis; 7,8-dihydroneopterin triphosphate biosynthesis; 7,8-dihydroneopterin triphosphate from GTP: step 1/1. The protein is GTP cyclohydrolase 1 of Shewanella denitrificans (strain OS217 / ATCC BAA-1090 / DSM 15013).